The sequence spans 309 residues: IGEVGSLVRAANCPRPQRNLPYAARTAPAPAQPPSPAPTPSRTPPVSATPRHRRRPERSKTPDKRSAETTQARTVERTGSAPKHRPEARCRQQIPWDDTHRQCAGSVGHNTLTALNTPSRTHHAAPHRRCFGCVGARPGGCVPGVSRACVGCVGGVLAGCVRVCRGRVPGVSCRVCRGRVAGVPAGCGGGVCRRCARPRGVRLRRNECVASRPLFPPRSPGPSSLAPGRCFSCVPRDPCCRPPGTSSFPRGITQTQTRVFFSPCAPHVAFIRRRRPPHHTQLVAVHTRNSKFHPPAKNTPPPLEDPPRG.

2 disordered regions span residues Ile-1–Ile-94 and His-286–Gly-309. The span at Pro-30–Thr-43 shows a compositional bias: pro residues. The span at Arg-58–Ala-67 shows a compositional bias: basic and acidic residues. Positions Lys-297 to Gly-309 are enriched in pro residues.

This is an uncharacterized protein from Homo sapiens (Human).